The sequence spans 152 residues: Protein SprT-like (152 aa).

The 142-residue stretch at 7-148 folds into the SprT-like domain; it reads QRLVEEVSLQ…GKCKGKLILI (142 aa). Residue His67 coordinates Zn(2+). Glu68 is an active-site residue. His71 contacts Zn(2+).

Belongs to the SprT family. Requires Zn(2+) as cofactor.

It is found in the cytoplasm. This Bacillus cereus (strain AH187) protein is Protein SprT-like.